Reading from the N-terminus, the 260-residue chain is Thiazole synthase (260 aa).

K96 acts as the Schiff-base intermediate with DXP in catalysis. Residues G157, 184 to 185 (AG), and 206 to 207 (NT) each bind 1-deoxy-D-xylulose 5-phosphate.

It belongs to the ThiG family. As to quaternary structure, homotetramer. Forms heterodimers with either ThiH or ThiS.

The protein localises to the cytoplasm. The enzyme catalyses [ThiS sulfur-carrier protein]-C-terminal-Gly-aminoethanethioate + 2-iminoacetate + 1-deoxy-D-xylulose 5-phosphate = [ThiS sulfur-carrier protein]-C-terminal Gly-Gly + 2-[(2R,5Z)-2-carboxy-4-methylthiazol-5(2H)-ylidene]ethyl phosphate + 2 H2O + H(+). Its pathway is cofactor biosynthesis; thiamine diphosphate biosynthesis. Functionally, catalyzes the rearrangement of 1-deoxy-D-xylulose 5-phosphate (DXP) to produce the thiazole phosphate moiety of thiamine. Sulfur is provided by the thiocarboxylate moiety of the carrier protein ThiS. In vitro, sulfur can be provided by H(2)S. This is Thiazole synthase from Rhodopseudomonas palustris (strain BisA53).